We begin with the raw amino-acid sequence, 316 residues long: Probable thioesterase lcsE (316 aa).

Belongs to the AMT4 thioesterase family.

It functions in the pathway secondary metabolite biosynthesis. Functionally, probable thioesterase; part of the gene cluster that mediates the biosynthesis of the lipopeptide antibiotics leucinostatins that show extensive biological activities, including antimalarial, antiviral, antibacterial, antifungal, and antitumor activities, as well as phytotoxic. Leucinostatin A contains nine amino acid residues, including the unusual amino acid 4-methyl-L-proline (MePro), 2-amino-6-hydroxy-4-methyl-8-oxodecanoic acid (AHyMeOA), 3-hydroxyleucine (HyLeu), alpha-aminoisobutyric acid (AIB), beta-Ala, a 4-methylhex-2-enoic acid at the N-terminus as well as a N1,N1-dimethylpropane-1,2-diamine (DPD) at the C-terminus. The biosynthesis of leucinostatins is probably initiated with the assembly of 4-methylhex-2-enoic acid by a reducing PKS. Two reducing polyketide synthases, lcsB and lcsC, have been identified in the cluster and it is not clear which is the one that assembles 4-methylhex-2-enoic acid since both contain KS, AT, DH, cMT, ER, KR and ACP domains. The polyketide residue might be transferred to the NRPS lcsA, mediated by two additional enzymes, the acyl-CoA ligase lcsD and the thioesterase lcsE. The linear polyketide carboxylic acid, which is released from PKS, is converted to a CoA thioester by lcsD, and then lcsE hydrolyzes the thiol bond and shuttles the polyketide intermediate to lcsA. The C domain of the first module catalyzed the condensation of 4-methylhex-2-enoic acid and MePro carried by domain A1, followed by successive condensations of nine amino acids to trigger the elongation of the linear peptide. A5 and A6 domains of lcsA are proposed to incorporate leucine, A2 AHyMeOA, and A3 incorporates HyLeu. A4, A7 and A8 incorporate AIB. The AHyMeOA in leucinostatin A activated by the A2 might be produced by the second PKS (lcsB or lcsC) present within the cluster. The MePro is probably produced via leucine cyclization and may originate from a separate pathway, independent of the cluster. Another nonproteinogenic amino acid, beta-Ala, could be produced by an aspartic acid decarboxylase also localized outside of the cluster. Two candidates are VFPBJ_01400 and VFPBJ_10476. The final peptide scaffold may be released by the NAD(P)H-dependent thioester reductase (TE) at the C-terminal region of lcsA. Transamination of the lcsA product by the transaminase lcsP may produce DPD at the C-terminus. Further hydroxylation steps performed alternatively by the cytochrome P450 monooxygenases lcsI, lcsK and lcsN then yield the non-methylated leucinostatins precursor. It is also possible that leucines can be hydroxylated prior to their incorporation into the peptide. Varying extents of methylation then lead to the formation of leucinostatins A and B. The polypeptide is Probable thioesterase lcsE (Purpureocillium lilacinum (Paecilomyces lilacinus)).